Consider the following 430-residue polypeptide: Histidinol dehydrogenase (430 aa).

Positions 124, 185, and 208 each coordinate NAD(+). Serine 233, glutamine 255, and histidine 258 together coordinate substrate. Residues glutamine 255 and histidine 258 each contribute to the Zn(2+) site. Residues glutamate 324 and histidine 325 each act as proton acceptor in the active site. Positions 325, 358, 412, and 418 each coordinate substrate. Aspartate 358 is a binding site for Zn(2+). Residue histidine 418 participates in Zn(2+) binding.

Belongs to the histidinol dehydrogenase family. Requires Zn(2+) as cofactor.

The catalysed reaction is L-histidinol + 2 NAD(+) + H2O = L-histidine + 2 NADH + 3 H(+). It functions in the pathway amino-acid biosynthesis; L-histidine biosynthesis; L-histidine from 5-phospho-alpha-D-ribose 1-diphosphate: step 9/9. Its function is as follows. Catalyzes the sequential NAD-dependent oxidations of L-histidinol to L-histidinaldehyde and then to L-histidine. The protein is Histidinol dehydrogenase of Leptospira biflexa serovar Patoc (strain Patoc 1 / Ames).